A 425-amino-acid chain; its full sequence is Imidazolonepropionase (425 aa).

2 residues coordinate Fe(3+): histidine 78 and histidine 80. Residues histidine 78 and histidine 80 each contribute to the Zn(2+) site. 4-imidazolone-5-propanoate-binding residues include arginine 87, tyrosine 150, and histidine 183. N-formimidoyl-L-glutamate is bound at residue tyrosine 150. Histidine 248 lines the Fe(3+) pocket. Histidine 248 provides a ligand contact to Zn(2+). Residue glutamine 251 participates in 4-imidazolone-5-propanoate binding. Residue aspartate 323 coordinates Fe(3+). Aspartate 323 serves as a coordination point for Zn(2+). Residues asparagine 325 and glycine 327 each contribute to the N-formimidoyl-L-glutamate site. Threonine 328 provides a ligand contact to 4-imidazolone-5-propanoate.

Belongs to the metallo-dependent hydrolases superfamily. HutI family. Zn(2+) is required as a cofactor. Requires Fe(3+) as cofactor.

It localises to the cytoplasm. It carries out the reaction 4-imidazolone-5-propanoate + H2O = N-formimidoyl-L-glutamate. Its pathway is amino-acid degradation; L-histidine degradation into L-glutamate; N-formimidoyl-L-glutamate from L-histidine: step 3/3. Its function is as follows. Catalyzes the hydrolytic cleavage of the carbon-nitrogen bond in imidazolone-5-propanoate to yield N-formimidoyl-L-glutamate. It is the third step in the universal histidine degradation pathway. The sequence is that of Imidazolonepropionase from Polaromonas sp. (strain JS666 / ATCC BAA-500).